The following is a 231-amino-acid chain: uncharacterized protein (231 aa).

Residues 1–25 form the signal peptide; it reads MAKWVPALLLRRVPLFSLRFRPASS. The Extracellular portion of the chain corresponds to 26–200; the sequence is TFLPVLAATE…SRPSPSATLT (175 aa). The tract at residues 39–64 is disordered; that stretch reads SVPSGDLSMPVKTRAEGEDDGFGEAG. The helical transmembrane segment at 201-225 threads the bilayer; it reads LLLASSCLLAPAPPSFILLLFTLIA. At 226 to 231 the chain is on the cytoplasmic side; that stretch reads PDLPHS.

Its subcellular location is the membrane. This is an uncharacterized protein from Homo sapiens (Human).